We begin with the raw amino-acid sequence, 119 residues long: Large ribosomal subunit protein eL31y (119 aa).

This sequence belongs to the eukaryotic ribosomal protein eL31 family.

This chain is Large ribosomal subunit protein eL31y (RPL31B), found in Arabidopsis thaliana (Mouse-ear cress).